We begin with the raw amino-acid sequence, 357 residues long: MNISSFSDNLTKILGKYEDLSEKLSSGIGGEEFVKASKEYADLEDIVQKIKEYNKAKAELEEANNFKQEPSLDKATLEMIEEEIRNLEDSLPTLERSVKIALLPKDEADSKSAIIEIRAGTGGEEAALFAAKLFNMYQRYAELKGWRFEILSIDETGIGGYKEVSASIKGKDVFSKLKFESGVHRVQRVPETESQGRIHTSAATVAVLPEVEDVDIKLEEKDLRIDTYRASGAGGQHVNTTDSAVRITHIPTGITVALQDEKSQHKNKAKALKILRARIYEEERRKKDQERANNRRKQIGSGDRSERIRTYNFPQGRVSDHRINLTLYKIDEVINGQLDEFIEALIANDEAKKLSDI.

Position 236 is an N5-methylglutamine (glutamine 236). Basic and acidic residues predominate over residues 284–293 (RRKKDQERAN). The interval 284–313 (RRKKDQERANNRRKQIGSGDRSERIRTYNF) is disordered.

The protein belongs to the prokaryotic/mitochondrial release factor family. Methylated by PrmC. Methylation increases the termination efficiency of RF1.

The protein resides in the cytoplasm. In terms of biological role, peptide chain release factor 1 directs the termination of translation in response to the peptide chain termination codons UAG and UAA. This Rickettsia bellii (strain RML369-C) protein is Peptide chain release factor 1.